The primary structure comprises 138 residues: Acidic phospholipase A2 1 (138 aa).

The first 16 residues, 1–16 (MRTLWIMAVLLVGVEG), serve as a signal peptide directing secretion. 7 cysteine pairs are disulfide-bonded: Cys-42-Cys-131, Cys-44-Cys-60, Cys-59-Cys-111, Cys-65-Cys-138, Cys-66-Cys-104, Cys-73-Cys-97, and Cys-91-Cys-102. Ca(2+) is bound by residues Phe-43, Gly-45, and Gly-47. The active site involves His-63. A Ca(2+)-binding site is contributed by Asp-64. Asp-105 is a catalytic residue.

The protein belongs to the phospholipase A2 family. Group II subfamily. D49 sub-subfamily. It depends on Ca(2+) as a cofactor. As to expression, expressed by the venom gland.

It is found in the secreted. It catalyses the reaction a 1,2-diacyl-sn-glycero-3-phosphocholine + H2O = a 1-acyl-sn-glycero-3-phosphocholine + a fatty acid + H(+). Functionally, snake venom phospholipase A2 (PLA2) that has high lipolytic activity. PLA2 catalyzes the calcium-dependent hydrolysis of the 2-acyl groups in 3-sn-phosphoglycerides. The chain is Acidic phospholipase A2 1 from Craspedocephalus gramineus (Bamboo pit viper).